The sequence spans 151 residues: FAD synthase (151 aa).

ATP-binding positions include 21–22, 26–29, and D104; these read TF and HPGH.

Belongs to the archaeal FAD synthase family. Homodimer. Requires a divalent metal cation as cofactor.

It catalyses the reaction FMN + ATP + H(+) = FAD + diphosphate. The protein operates within cofactor biosynthesis; FAD biosynthesis; FAD from FMN: step 1/1. Its function is as follows. Catalyzes the transfer of the AMP portion of ATP to flavin mononucleotide (FMN) to produce flavin adenine dinucleotide (FAD) coenzyme. This chain is FAD synthase, found in Methanosarcina mazei (strain ATCC BAA-159 / DSM 3647 / Goe1 / Go1 / JCM 11833 / OCM 88) (Methanosarcina frisia).